Consider the following 82-residue polypeptide: Cytochrome c oxidase subunit 8, mitochondrial (82 aa).

The transit peptide at 1-31 directs the protein to the mitochondrion; it reads MFSRVALRAAPRQQPFSLVARRTFQTTRAQL. Over 32 to 52 the chain is Mitochondrial matrix; the sequence is SSPYHYPEGPRSNLPFNPKTR. Residues 53–75 traverse the membrane as a helical segment; it reads FFWFRYLMYCVVGFGSPVAIAVW. The Mitochondrial intermembrane segment spans residues 76–82; it reads QTYRPRS.

It belongs to the cytochrome c oxidase VIIc family. In terms of assembly, component of the cytochrome c oxidase (complex IV, CIV), a multisubunit enzyme composed of 11 subunits. The complex is composed of a catalytic core of 3 subunits Cox1, Cox2 and Cox3, encoded in the mitochondrial DNA, and 8 supernumerary subunits Cox4, Cox5a/Cox5, Cox6, Cox7, Cox8, Cox7a/Cox9, Cox6b/Cox12 and Cox6a/Cox13, which are encoded in the nuclear genome. The complex exists as a monomer or a dimer and forms respiratory supercomplexes (SCs) in the inner mitochondrial membrane with NADH-ubiquinone oxidoreductase (complex I, CI) and ubiquinol-cytochrome c oxidoreductase (cytochrome b-c1 complex, complex III, CIII), resulting in various different assemblies (supercomplexes I(1)IV(1), I(1)III(3)IV(2), III(2)IV(1) and III(2)IV(2) as well as larger supercomplexes of compositions like I(1)III(2)IV(5-6)).

It is found in the mitochondrion inner membrane. The protein operates within energy metabolism; oxidative phosphorylation. Functionally, component of the cytochrome c oxidase, the last enzyme in the mitochondrial electron transport chain which drives oxidative phosphorylation. The respiratory chain contains 3 multisubunit complexes succinate dehydrogenase (complex II, CII), ubiquinol-cytochrome c oxidoreductase (cytochrome b-c1 complex, complex III, CIII) and cytochrome c oxidase (complex IV, CIV), that cooperate to transfer electrons derived from NADH and succinate to molecular oxygen, creating an electrochemical gradient over the inner membrane that drives transmembrane transport and the ATP synthase. Cytochrome c oxidase is the component of the respiratory chain that catalyzes the reduction of oxygen to water. Electrons originating from reduced cytochrome c in the intermembrane space (IMS) are transferred via the dinuclear copper A center (CU(A)) of Cox2 and heme A of Cox1 to the active site in Cox1, a binuclear center (BNC) formed by heme A3 and copper B (CU(B)). The BNC reduces molecular oxygen to 2 water molecules using 4 electrons from cytochrome c in the IMS and 4 protons from the mitochondrial matrix. The chain is Cytochrome c oxidase subunit 8, mitochondrial (cox-15) from Neurospora crassa (strain ATCC 24698 / 74-OR23-1A / CBS 708.71 / DSM 1257 / FGSC 987).